Consider the following 127-residue polypeptide: Large ribosomal subunit protein bL20 (127 aa).

This sequence belongs to the bacterial ribosomal protein bL20 family.

Its function is as follows. Binds directly to 23S ribosomal RNA and is necessary for the in vitro assembly process of the 50S ribosomal subunit. It is not involved in the protein synthesizing functions of that subunit. This Streptomyces griseus subsp. griseus (strain JCM 4626 / CBS 651.72 / NBRC 13350 / KCC S-0626 / ISP 5235) protein is Large ribosomal subunit protein bL20.